A 336-amino-acid chain; its full sequence is HTH-type transcriptional repressor PurR (336 aa).

The HTH lacI-type domain maps to 2–56; the sequence is ATIKDVAKMAGVSTTTVSHVINKTRFVAKDTEEAVLSAIKQLNYSPSAVARSLKV. The segment at residues 4 to 23 is a DNA-binding region (H-T-H motif); that stretch reads IKDVAKMAGVSTTTVSHVIN. Residues 48–56 mediate DNA binding; that stretch reads SAVARSLKV. The hypoxanthine site is built by Tyr73, Lys188, Thr190, Phe219, and Asp273.

In terms of assembly, homodimer.

Its pathway is purine metabolism; purine nucleotide biosynthesis [regulation]. Is the main repressor of the genes involved in the de novo synthesis of purine nucleotides, regulating purB, purC, purEK, purF, purHD, purL, purMN and guaBA expression. PurR is allosterically activated to bind its cognate DNA by binding the purine corepressors, hypoxanthine or guanine, thereby effecting transcription repression. This Haemophilus influenzae (strain PittGG) protein is HTH-type transcriptional repressor PurR.